A 393-amino-acid polypeptide reads, in one-letter code: DNA/RNA-binding protein KIN17 (393 aa).

Residues 28–50 (CQMCQKQCRDENGFKCHCMSESH) form a C2H2-type zinc finger. The tract at residues 51-160 (QRQLLLASEN…RQLELEKKKK (110 aa)) is winged helix-turn-helix (wHTH). N6,N6,N6-trimethyllysine; by METTL22; in vitro is present on K135. At K135 the chain carries N6-methyllysine. A coiled-coil region spans residues 147–180 (ETIRRQLELEKKKKQDLDDEEKTAKFIEEQVRRG). Residues 209-224 (KGACSSSGATSSKSST) are compositionally biased toward low complexity. A disordered region spans residues 209-260 (KGACSSSGATSSKSSTLGPSALKTIGSSASVKRKESSQSSTQSKEKKKKKSA). A coiled-coil region spans residues 250-277 (QSKEKKKKKSALDEIMEIEEEKKRTART). The segment at 284–334 (EIIVKIITKKLGEKYHKKKAIVKEVIDKYTAVVKMIDSGDKLKLDQTHLET) is C-terminal subdomain A. Positions 340–391 (GKRILVLNGGYRGNEGTLESINEKTFSATIVIETGPLKGRRVEGIQYEDISK) are C-terminal subdomain B.

It belongs to the KIN17 family. In terms of assembly, associated with DNA polymerase alpha, RFC1 and cyclin A, in multiprotein DNA replication complexes. Also associates with replication origins at the G1/S phase boundary and throughout the S phase in vivo. (Microbial infection) Interacts with SV40 large T antigen. Ubiquitously expressed in all tissues examined, with highest levels in skeletal muscle, heart and testis. Differentially expressed in non-tumorigenic and tumorigenic cell lines. Highly expressed in proliferating epithelial keratinocyte cells in vitro (at protein level).

The protein localises to the nucleus. The protein resides in the cytoplasm. Functionally, involved in DNA replication and the cellular response to DNA damage. May participate in DNA replication factories and create a bridge between DNA replication and repair mediated by high molecular weight complexes. May play a role in illegitimate recombination and regulation of gene expression. May participate in mRNA processing. Binds, in vitro, to double-stranded DNA. Also shown to bind preferentially to curved DNA in vitro and in vivo. Binds via its C-terminal domain to RNA in vitro. The protein is DNA/RNA-binding protein KIN17 of Homo sapiens (Human).